The chain runs to 1272 residues: AF4/FMR2 family member 2 (1272 aa).

Disordered stretches follow at residues 93–183 (IPKN…LTQD) and 200–223 (PQIG…SSGE). Polar residues predominate over residues 97-107 (SVPQNPNNKNE). Positions 151 to 160 (SKPEWSRDSH) are enriched in basic and acidic residues. Residues 161-183 (NPSTVLASQASGQPNKMQTLTQD) show a composition bias toward polar residues. Residues 212–223 (AKEDSNPKSSGE) are compositionally biased toward basic and acidic residues. Ser391 is subject to Phosphoserine. 4 disordered regions span residues 418–491 (KAKP…KWQL), 535–687 (TNAS…DQEE), 779–829 (SLHA…PEKK), and 842–903 (PPCI…QDKN). Residues 426–438 (VNPPLATPQPPPA) show a composition bias toward pro residues. A compositionally biased stretch (low complexity) spans 439 to 452 (VQASGGSGSSSESE). The residue at position 478 (Thr478) is a Phosphothreonine. The segment covering 543–558 (EPKERPLLSLIREKAR) has biased composition (basic and acidic residues). The segment covering 576-586 (STTSETVSQRT) has biased composition (polar residues). The span at 616–629 (PKEKESVELHDPPR) shows a compositional bias: basic and acidic residues. The segment covering 630–640 (GRNKATAHKPA) has biased composition (basic residues). A compositionally biased stretch (basic and acidic residues) spans 818–829 (PTEVAEKIPEKK). Composition is skewed to pro residues over residues 844 to 853 (CISPAPPHKP) and 874 to 883 (FPPPLSPLPE).

It belongs to the AF4 family.

It localises to the nucleus speckle. In terms of biological role, RNA-binding protein. Might be involved in alternative splicing regulation through an interaction with G-quartet RNA structure. The chain is AF4/FMR2 family member 2 (AFF2) from Pongo pygmaeus (Bornean orangutan).